The chain runs to 430 residues: MTNIVVVGLQWGDEGKGKVVDWLSNNADAVVRFQGGNNAGHTIVIQEKTYKLNLLPSSILHNNKLSIIGNGVVLDPYALMSEIDNLRINGININTQNLVISESCPLVLNIHKEADTLFEQLRQNTIGTTNKGIGPCYADKISRRALRVCDLFDKKDILYNKVNNLLNYHNLLRQNFNILPIEASKLVDELLDIAPKILPFVKPVWKVIHDLTQQNKTIIFEGAQGTFLDIDHGTYPFVTSSNTIAPQAFVGGGINLSHSSCVLGVIKAYTTRVGNGPFFTEQKNEIGKSMFERGNEIGTVSNRERRCGWFDAVLAKQAIILSGVSGLVLTKLDVLDQFSEIKICTQYKYDGVIYDYIPASSYVQNNLEPIYETVPGWKENTFGSVTYEDLPKNAISYIKKIEEILKVPVYLISTGPERNAMIIINDKFLK.

GTP contacts are provided by residues 12-18 (GDEGKGK) and 40-42 (GHT). Catalysis depends on D13, which acts as the Proton acceptor. Mg(2+) contacts are provided by D13 and G40. IMP contacts are provided by residues 13–16 (DEGK), 38–41 (NAGH), T129, R143, Q224, T239, and R303. H41 functions as the Proton donor in the catalytic mechanism. 299-305 (TVSNRER) contacts substrate. GTP contacts are provided by residues R305, 331 to 333 (KLD), and 413 to 415 (STG).

Belongs to the adenylosuccinate synthetase family. As to quaternary structure, homodimer. Mg(2+) serves as cofactor.

The protein resides in the cytoplasm. It catalyses the reaction IMP + L-aspartate + GTP = N(6)-(1,2-dicarboxyethyl)-AMP + GDP + phosphate + 2 H(+). It participates in purine metabolism; AMP biosynthesis via de novo pathway; AMP from IMP: step 1/2. Functionally, plays an important role in the de novo pathway of purine nucleotide biosynthesis. Catalyzes the first committed step in the biosynthesis of AMP from IMP. The sequence is that of Adenylosuccinate synthetase from Ehrlichia ruminantium (strain Welgevonden).